The primary structure comprises 374 residues: Large ribosomal subunit protein uL4 (374 aa).

Residues 336–355 (EKAMAKGMQNKKNREARHAA) are disordered.

The protein belongs to the universal ribosomal protein uL4 family.

In Trypanosoma brucei brucei, this protein is Large ribosomal subunit protein uL4 (RPL4).